Reading from the N-terminus, the 1037-residue chain is Ribonuclease E (1037 aa).

3 disordered regions span residues 1-23 (MAEDAHTEDLSTQTPQQEGLPER), 47-90 (FDGR…ETPV), and 106-369 (VSEA…PILS). Over residues 47 to 67 (FDGRQRSAHSTVDKADAERVR) the composition is skewed to basic and acidic residues. Low complexity-rich tracts occupy residues 68-90 (AALTESPAAETPPEEAPAAETPV) and 106-126 (VSEAGPAEPAEPAEPEAPAAE). Composition is skewed to acidic residues over residues 127–141 (AEAEAETEVADEAET) and 196–226 (VVDDEDEDDDTETGAESDFDSGADSDSDDDQ). Over residues 230 to 242 (PRRRRRGRRGRGR) the composition is skewed to basic residues. A compositionally biased stretch (acidic residues) spans 248-284 (NDDATSDADTDSTEDQTDGDEQESGEDSDDSGDEDST). Residues 291–301 (RRRRRRRRRKS) are compositionally biased toward basic residues. A compositionally biased stretch (basic and acidic residues) spans 320–335 (VHERAPRTERSDKSDD). Residues 427–504 (GNIYLGIVQN…GHKGARLTTQ (78 aa)) form the S1 motif domain. Residues 561–589 (EDIRSDVERLQKRWSEIEAKAAEVTEKKA) are a coiled coil. The Mg(2+) site is built by D694 and D738. Zn(2+)-binding residues include C796 and C799. The segment at 810 to 1037 (PIDSASSNGG…ARPAGPPSHD (228 aa)) is disordered. Positions 834 to 843 (RRGKRGKKGA) are enriched in basic residues. Residues 844-864 (ARTEEVHVAKVPDHTPGEHPM) show a composition bias toward basic and acidic residues. The segment covering 879–891 (EDHEDHEDHETAE) has biased composition (acidic residues). Positions 897–913 (EVRDDTRDEHDADERAH) are enriched in basic and acidic residues. The span at 923 to 1006 (GDEDLDDSDE…DSDSDEDEEP (84 aa)) shows a compositional bias: acidic residues.

This sequence belongs to the RNase E/G family. As to quaternary structure, assembles into a homotetramer formed by a dimer of dimers. Interacts with DNA-binding protein HhupB. Mg(2+) is required as a cofactor. Requires Zn(2+) as cofactor.

It is found in the cytoplasm. It carries out the reaction Endonucleolytic cleavage of single-stranded RNA in A- and U-rich regions.. In terms of biological role, endoribonuclease that plays a central role in RNA processing and decay. Plays a major role in pre-16S rRNA maturation, probably generating the mature 5'-end, and a minor role in pre-5S and pre-23S rRNA maturation. Probably also processes tRNA. RNase E and HupB jointly contribute to cellular adaptation to changing growth conditions and survival during antibiotic treatment. Overexpression or depletion leads to changes in gene expression; overexpression induces metabolic slowdown and cell stress while depleted strains grow less well than induced strains. The sequence is that of Ribonuclease E (rne) from Mycolicibacterium smegmatis (strain ATCC 700084 / mc(2)155) (Mycobacterium smegmatis).